We begin with the raw amino-acid sequence, 303 residues long: 4-diphosphocytidyl-2-C-methyl-D-erythritol kinase (303 aa).

Lysine 21 is a catalytic residue. Proline 106–alanine 116 is a binding site for ATP. Residue aspartate 148 is part of the active site.

This sequence belongs to the GHMP kinase family. IspE subfamily.

It carries out the reaction 4-CDP-2-C-methyl-D-erythritol + ATP = 4-CDP-2-C-methyl-D-erythritol 2-phosphate + ADP + H(+). Its pathway is isoprenoid biosynthesis; isopentenyl diphosphate biosynthesis via DXP pathway; isopentenyl diphosphate from 1-deoxy-D-xylulose 5-phosphate: step 3/6. Functionally, catalyzes the phosphorylation of the position 2 hydroxy group of 4-diphosphocytidyl-2C-methyl-D-erythritol. In Nitrobacter hamburgensis (strain DSM 10229 / NCIMB 13809 / X14), this protein is 4-diphosphocytidyl-2-C-methyl-D-erythritol kinase.